A 185-amino-acid polypeptide reads, in one-letter code: Acireductone dioxygenase (185 aa).

Positions 101, 103, 107, and 145 each coordinate Fe(2+). Ni(2+) contacts are provided by His101, His103, Glu107, and His145.

The protein belongs to the acireductone dioxygenase (ARD) family. In terms of assembly, monomer. It depends on Fe(2+) as a cofactor. Ni(2+) is required as a cofactor.

It catalyses the reaction 1,2-dihydroxy-5-(methylsulfanyl)pent-1-en-3-one + O2 = 3-(methylsulfanyl)propanoate + CO + formate + 2 H(+). The catalysed reaction is 1,2-dihydroxy-5-(methylsulfanyl)pent-1-en-3-one + O2 = 4-methylsulfanyl-2-oxobutanoate + formate + 2 H(+). It functions in the pathway amino-acid biosynthesis; L-methionine biosynthesis via salvage pathway; L-methionine from S-methyl-5-thio-alpha-D-ribose 1-phosphate: step 5/6. Functionally, catalyzes 2 different reactions between oxygen and the acireductone 1,2-dihydroxy-3-keto-5-methylthiopentene (DHK-MTPene) depending upon the metal bound in the active site. Fe-containing acireductone dioxygenase (Fe-ARD) produces formate and 2-keto-4-methylthiobutyrate (KMTB), the alpha-ketoacid precursor of methionine in the methionine recycle pathway. Ni-containing acireductone dioxygenase (Ni-ARD) produces methylthiopropionate, carbon monoxide and formate, and does not lie on the methionine recycle pathway. This chain is Acireductone dioxygenase, found in Synechococcus sp. (strain RCC307).